Here is a 303-residue protein sequence, read N- to C-terminus: DnaJ homolog subfamily C member 17 (303 aa).

The J domain occupies 11-76; the sequence is DLYALLGIEE…AARAAYDKVR (66 aa). Disordered regions lie at residues 104-123 and 150-170; these read ERQA…SATT and IRQD…GKGT. The residue at position 112 (S112) is a Phosphoserine. The segment covering 150–166 has biased composition (basic and acidic residues); that stretch reads IRQDREQRLRGRTENTE. Residues 178–249 form the RRM domain; that stretch reads KCKKEDESQG…NPLKVSWLEG (72 aa). The residue at position 264 (K264) is an N6-methyllysine.

Expressed in the thyroid gland.

The protein resides in the cytoplasm. It is found in the nucleus. Its function is as follows. May negatively affect PAX8-induced thyroglobulin/TG transcription. The protein is DnaJ homolog subfamily C member 17 (Dnajc17) of Mus musculus (Mouse).